The chain runs to 186 residues: UPF0340 protein SZO_02480 (186 aa).

It belongs to the UPF0340 family.

This chain is UPF0340 protein SZO_02480, found in Streptococcus equi subsp. zooepidemicus (strain H70).